The following is a 377-amino-acid chain: MSCPYAGNSNEHDDAAVPLSNDVGKIYGEYLMLDKLLDAQCMLSMEDKRPVHDEHLFIITHQAYELWFKQIIFEFDSIRDMLDAEVIDETKTLEIVKRLNRVVLILKLLVDQVPILETMTPLDFMDFRKYLAPASGFQSLQFRLIENKLGVLTEQRVKYNQKYSDVFGNDERALNAIRSSEDNPSLLELVQRWLERTPGLEADGFNFWEKFQHSVDQFLAAQVHSALLEPVEQAKNYRLMDIEKRREVYRSIFDPALHEALVKRGDRRFSHGALQGAIMITFYRDEPRFSQPHQLLTLLMDIDSLITKWRYNHVIMVQRMIGSQQLGTGGSSGYQYLRSTLSDRYKVFLDLFNLSTFLIPREAIPPLDESIRQKLIH.

Residues 57-61 and Arg128 contribute to the substrate site; that span reads FIITH. His313 provides a ligand contact to heme. Residue Thr328 participates in substrate binding.

Belongs to the tryptophan 2,3-dioxygenase family. In terms of assembly, homotetramer. Dimer of dimers. Heme serves as cofactor.

The catalysed reaction is L-tryptophan + O2 = N-formyl-L-kynurenine. It functions in the pathway amino-acid degradation; L-tryptophan degradation via kynurenine pathway; L-kynurenine from L-tryptophan: step 1/2. Its pathway is pigment biosynthesis; ommochrome biosynthesis. Its function is as follows. Heme-dependent dioxygenase that catalyzes the oxidative cleavage of the L-tryptophan (L-Trp) pyrrole ring and converts L-tryptophan to N-formyl-L-kynurenine. Catalyzes the oxidative cleavage of the indole moiety. This chain is Tryptophan 2,3-dioxygenase, found in Drosophila grimshawi (Hawaiian fruit fly).